Consider the following 415-residue polypeptide: Phosphoglycerate kinase (415 aa).

13 residues coordinate (2R)-3-phosphoglycerate: Val-23, Asp-24, Phe-25, Asn-26, Gln-39, Arg-40, Ser-63, His-64, Gly-66, Arg-67, Leu-122, Arg-123, and Arg-170. Gly-213 is a binding site for ADP. Gly-213 serves as a coordination point for CDP. Residues Ala-214 and Lys-215 each contribute to the AMP site. Residue Ala-214 participates in ATP binding. Ala-214 contributes to the Mg(2+) binding site. A CDP-binding site is contributed by Asp-218. Asp-218 is a binding site for Mg(2+). Lys-219 lines the AMP pocket. An ATP-binding site is contributed by Lys-219. ADP is bound at residue Gly-237. CDP is bound at residue Gly-237. AMP is bound by residues Gly-238 and Gly-311. Gly-238 and Gly-311 together coordinate ATP. Residues Gly-336 and Phe-341 each contribute to the CDP site. ADP is bound at residue Phe-341. An AMP-binding site is contributed by Glu-342. ATP-binding residues include Glu-342, Asp-373, and Thr-374. Asp-373 provides a ligand contact to Mg(2+).

This sequence belongs to the phosphoglycerate kinase family. Monomer. It depends on Mg(2+) as a cofactor.

The protein localises to the cytoplasm. It localises to the mitochondrion. The catalysed reaction is (2R)-3-phosphoglycerate + ATP = (2R)-3-phospho-glyceroyl phosphate + ADP. Its pathway is carbohydrate degradation; glycolysis; pyruvate from D-glyceraldehyde 3-phosphate: step 2/5. Functionally, catalyzes one of the two ATP producing reactions in the glycolytic pathway via the reversible conversion of 1,3-diphosphoglycerate to 3-phosphoglycerate. Both L- and D- forms of purine and pyrimidine nucleotides can be used as substrates, but the activity is much lower on pyrimidines. Negatively regulates the biosynthesis of acetyl-CoA from pyruvate in the mitochondrion. This is Phosphoglycerate kinase (PGKA) from Penicillium chrysogenum (Penicillium notatum).